The sequence spans 348 residues: Protein-arginine N-acetylglucosaminyltransferase SseK2 (348 aa).

UDP-N-acetyl-alpha-D-glucosamine-binding positions include 64–66 (QWF), Tyr-88, and 237–240 (YLDA). The short motif at 239 to 241 (DAD) is the DXD motif element. Asp-241 lines the Mn(2+) pocket. The active-site Proton acceptor is Glu-271. Residues Asn-338, Ser-340, and 345 to 348 (SSWR) contribute to the UDP-N-acetyl-alpha-D-glucosamine site. Positions 338 and 340 each coordinate Mn(2+).

The protein belongs to the glycosyltransferase NleB family. Mn(2+) is required as a cofactor.

It localises to the secreted. The protein localises to the host Golgi apparatus. The enzyme catalyses L-arginyl-[protein] + UDP-N-acetyl-alpha-D-glucosamine = N(omega)-(N-acetyl-beta-D-glucosaminyl)-L-arginyl-[protein] + UDP + H(+). With respect to regulation, protein-arginine N-acetylglucosaminyltransferase activity is inhibited by 100066N compound (flavone analog) and 102644N compound (a substituted isoxazole). In terms of biological role, protein-arginine N-acetylglucosaminyltransferase effector that catalyzes the transfer of a single N-acetylglucosamine (GlcNAc) to a conserved arginine residue in the death domain of host proteins such as FADD: arginine GlcNAcylation prevents homotypic/heterotypic death domain interactions. Also acts on host proteins without a death domain: catalyzes arginine GlcNAcylation of host small Rab1 GTPase, thereby preventing GTPase activity and leading to impaired host vesicular protein transport. In contrast to Ssek1, not able to disrupt TNF signaling in infected cells. The polypeptide is Protein-arginine N-acetylglucosaminyltransferase SseK2 (Salmonella typhimurium (strain SL1344)).